A 428-amino-acid chain; its full sequence is Isocitrate dehydrogenase [NADP], mitochondrial (428 aa).

A mitochondrion-targeting transit peptide spans 1-16 (MSMLSRRLFSTSRLAA). NADP(+) contacts are provided by residues 91–93 (TIT) and Arg98. Thr93 serves as a coordination point for substrate. Substrate is bound by residues 110-116 (SPNGTIR), Arg125, and Arg148. Asp269 lines the Mn(2+) pocket. An NADP(+)-binding site is contributed by Lys277. A Mn(2+)-binding site is contributed by Asp292. NADP(+) contacts are provided by residues 327–332 (GTVTRH) and Asn345.

It belongs to the isocitrate and isopropylmalate dehydrogenases family. Homodimer. Mg(2+) serves as cofactor. It depends on Mn(2+) as a cofactor.

Its subcellular location is the mitochondrion. It carries out the reaction D-threo-isocitrate + NADP(+) = 2-oxoglutarate + CO2 + NADPH. With respect to regulation, the enzyme is subject to end product inhibition by NADPH and 2-oxoglutarate. In terms of biological role, mitochondrial IDP1 may regulate flux through the tricarboxylic acid cycle and respiration. Its probably critical function is the production of NADPH. The chain is Isocitrate dehydrogenase [NADP], mitochondrial (IDP1) from Saccharomyces cerevisiae (strain ATCC 204508 / S288c) (Baker's yeast).